The sequence spans 226 residues: NEDD8-specific protease 1 (226 aa).

This sequence belongs to the peptidase C48 family.

Functionally, processes the pre-form of the ubiquitin-like protein NEDD8/RUB1. Has the capacity to discriminate between NEDD8/RUB1 and ubiquitin. Has no SUMO protease activity. This Arabidopsis thaliana (Mouse-ear cress) protein is NEDD8-specific protease 1 (NEDP1).